Reading from the N-terminus, the 77-residue chain is Large ribosomal subunit protein eL13 (77 aa).

This sequence belongs to the eukaryotic ribosomal protein eL13 family.

The sequence is that of Large ribosomal subunit protein eL13 from Sulfurisphaera tokodaii (strain DSM 16993 / JCM 10545 / NBRC 100140 / 7) (Sulfolobus tokodaii).